The primary structure comprises 212 residues: MGLHLGLIDYGMGNLHSVEKAFNRLGHQPSRVVNPSDLDGCDALVLPGVGSFDPAIDNLQSTGLIPDLKRWNEADRPLLGICLGLQLLFESSAEGRLEGLGLIKGHVERLPIGAGARIPHMGWAPLDLRRANPMLAAADPLAWVYFVHSYAAVPERPETLAAAASFGSSSVTAMVWQRRLGACQFHPEKSSDSGSAMLKRWLDWLQRGAPIG.

Residues His-4 to Ile-211 enclose the Glutamine amidotransferase type-1 domain. The active-site Nucleophile is Cys-82. Residues His-186 and Glu-188 contribute to the active site.

Heterodimer of HisH and HisF.

It is found in the cytoplasm. It carries out the reaction 5-[(5-phospho-1-deoxy-D-ribulos-1-ylimino)methylamino]-1-(5-phospho-beta-D-ribosyl)imidazole-4-carboxamide + L-glutamine = D-erythro-1-(imidazol-4-yl)glycerol 3-phosphate + 5-amino-1-(5-phospho-beta-D-ribosyl)imidazole-4-carboxamide + L-glutamate + H(+). The enzyme catalyses L-glutamine + H2O = L-glutamate + NH4(+). It functions in the pathway amino-acid biosynthesis; L-histidine biosynthesis; L-histidine from 5-phospho-alpha-D-ribose 1-diphosphate: step 5/9. Its function is as follows. IGPS catalyzes the conversion of PRFAR and glutamine to IGP, AICAR and glutamate. The HisH subunit provides the glutamine amidotransferase activity that produces the ammonia necessary to HisF for the synthesis of IGP and AICAR. The protein is Imidazole glycerol phosphate synthase subunit HisH 2 (hisH2) of Parasynechococcus marenigrum (strain WH8102).